Reading from the N-terminus, the 297-residue chain is uncharacterized protein (297 aa).

Helical transmembrane passes span 26 to 48 (FVLH…IYAI), 80 to 102 (NIEL…AALF), 134 to 156 (LFKF…INLG), 185 to 205 (LGIF…AIVI), 225 to 247 (LVDT…VAAY), and 262 to 284 (LVAV…VELY).

The protein localises to the cell membrane. This is an uncharacterized protein from Archaeoglobus fulgidus (strain ATCC 49558 / DSM 4304 / JCM 9628 / NBRC 100126 / VC-16).